Consider the following 380-residue polypeptide: tRNA (guanine(26)-N(2))-dimethyltransferase (380 aa).

The Trm1 methyltransferase domain occupies 2-374 (ITVNEGSVTI…AGIGEIEEVL (373 aa)). S-adenosyl-L-methionine contacts are provided by Arg-35, Arg-65, Asp-83, Asp-109, and Ala-110. The Zn(2+) site is built by Cys-242, Cys-245, Cys-261, and Cys-264.

It belongs to the class I-like SAM-binding methyltransferase superfamily. Trm1 family.

The catalysed reaction is guanosine(26) in tRNA + 2 S-adenosyl-L-methionine = N(2)-dimethylguanosine(26) in tRNA + 2 S-adenosyl-L-homocysteine + 2 H(+). In terms of biological role, dimethylates a single guanine residue at position 26 of a number of tRNAs using S-adenosyl-L-methionine as donor of the methyl groups. The chain is tRNA (guanine(26)-N(2))-dimethyltransferase from Methanothermobacter thermautotrophicus (strain ATCC 29096 / DSM 1053 / JCM 10044 / NBRC 100330 / Delta H) (Methanobacterium thermoautotrophicum).